A 103-amino-acid polypeptide reads, in one-letter code: Histone H4 (103 aa).

The segment covering 1–14 has biased composition (gly residues); sequence MTGRGKGGKGLGKG. The segment at 1–20 is disordered; sequence MTGRGKGGKGLGKGGAKRHR. Lys6 and Lys13 each carry N6-acetyl-N6-methyllysine; alternate. A DNA-binding region spans residues 17–21; it reads KRHRK.

This sequence belongs to the histone H4 family. In terms of assembly, the nucleosome is a histone octamer containing two molecules each of H2A, H2B, H3 and H4 assembled in one H3-H4 heterotetramer and two H2A-H2B heterodimers. The octamer wraps approximately 147 bp of DNA.

The protein resides in the nucleus. The protein localises to the chromosome. Its function is as follows. Core component of nucleosome. Nucleosomes wrap and compact DNA into chromatin, limiting DNA accessibility to the cellular machineries which require DNA as a template. Histones thereby play a central role in transcription regulation, DNA repair, DNA replication and chromosomal stability. DNA accessibility is regulated via a complex set of post-translational modifications of histones, also called histone code, and nucleosome remodeling. The polypeptide is Histone H4 (Trichogramma cacaeciae (Moth egg parasite)).